The following is a 272-amino-acid chain: Tumor necrosis factor receptor superfamily member 4 (272 aa).

The signal sequence occupies residues 1-19 (MYVWVQQPTALLLLALTLG). At 20-211 (VTARRLNCVK…PPTLVTPEGP (192 aa)) the chain is on the extracellular side. TNFR-Cys repeat units lie at residues 26-61 (NCVK…TLCH) and 62-103 (PCET…DTVC). 8 disulfide bridges follow: C27–C38, C39–C52, C42–C60, C63–C77, C80–C95, C83–C103, C105–C123, and C126–C139. A TNFR-Cys 3; truncated repeat occupies 104-124 (RCRPGTQPRQDSGYKLGVDCV). The stretch at 125-165 (PCPPGHFSPGNNQACKPWTNCTLSGKQTRHPASDSLDAVCE) is one TNFR-Cys 4 repeat. The N-linked (GlcNAc...) asparagine glycan is linked to N144. C145 and C164 are oxidised to a cystine. A helical transmembrane segment spans residues 212–236 (AFAVLLGLGLGLLAPLTVLLALYLL). Residues 237–272 (RKAWRLPNTPKPCWGNSFRTPIQEEHTDAHFTLAKI) are Cytoplasmic-facing.

As to quaternary structure, interacts with TRAF2, TRAF3 and TRAF5. Expressed in CD4(+) T-cells and in T-helper Th17 cells (at protein level).

Its subcellular location is the membrane. Receptor for TNFSF4/OX40L/GP34. Is a costimulatory molecule implicated in long-term T-cell immunity. The sequence is that of Tumor necrosis factor receptor superfamily member 4 (Tnfrsf4) from Mus musculus (Mouse).